A 74-amino-acid polypeptide reads, in one-letter code: Antimicrobial peptide HsAp1 (74 aa).

Residues 1–21 (MSRRVILTLVLVTILVKTMAG) form the signal peptide. A propeptide spanning residues 22-33 (MESKKVETTDEI) is cleaved from the precursor. A Proline amide modification is found at P65. The propeptide occupies 69–74 (AISEQT).

It belongs to the non-disulfide-bridged peptide (NDBP) superfamily. Medium-length antimicrobial peptide (group 3) family. As to expression, expressed by the venom gland.

The protein localises to the secreted. The protein resides in the target cell membrane. In terms of biological role, possesses antimicrobial activity against both Gram-negative (MIC=23.8-51.2 uM) and Gram-positive (MIC=11.8-46.5 uM) bacteria, as well as against the fungus C.tropicalis (MIC=48.6 uM). Also possesses a relatively high hemolytic activity. May act by disrupting the integrity of the bacterial cell membrane. The sequence is that of Antimicrobial peptide HsAp1 from Heterometrus spinifer (Asia giant forest scorpion).